The primary structure comprises 297 residues: 33 kDa chaperonin (297 aa).

2 disulfides stabilise this stretch: cysteine 233–cysteine 235 and cysteine 267–cysteine 270.

It belongs to the HSP33 family. Post-translationally, under oxidizing conditions two disulfide bonds are formed involving the reactive cysteines. Under reducing conditions zinc is bound to the reactive cysteines and the protein is inactive.

The protein resides in the cytoplasm. Its function is as follows. Redox regulated molecular chaperone. Protects both thermally unfolding and oxidatively damaged proteins from irreversible aggregation. Plays an important role in the bacterial defense system toward oxidative stress. The polypeptide is 33 kDa chaperonin (Haemophilus ducreyi (strain 35000HP / ATCC 700724)).